A 712-amino-acid polypeptide reads, in one-letter code: Probable GTP diphosphokinase RSH3, chloroplastic (712 aa).

The transit peptide at 1–64 (MVVATTIALY…LLFSGASVKS (64 aa)) directs the protein to the chloroplast. Residues 65 to 74 (SSSSSSSHPS) show a composition bias toward low complexity. The segment at 65–84 (SSSSSSSHPSVGEELASIRH) is disordered. An HD domain is found at 237–338 (YLQHCVETAM…IKLADRLHNM (102 aa)).

This sequence belongs to the RelA/SpoT family.

It localises to the plastid. It is found in the chloroplast. The enzyme catalyses GTP + ATP = guanosine 3'-diphosphate 5'-triphosphate + AMP. Functionally, probable ppGpp (guanosine 3'-diphosphate 5'-diphosphate) synthetase that may be involved in a rapid plant ppGpp-mediated response to pathogens and other stresses. The chain is Probable GTP diphosphokinase RSH3, chloroplastic (RSH3) from Arabidopsis thaliana (Mouse-ear cress).